We begin with the raw amino-acid sequence, 114 residues long: MSTENGTTDTTLAGTAEANTPFESKGKGKAAAESEDHPMGEAEDDEDDEDEDETEEPEAEEDNLEEIDPSNVISGPRTRQKEIDYAKAAQDLPAEEDDEEDDEEFVPEDEEMEE.

Positions 1-22 (MSTENGTTDTTLAGTAEANTPF) are enriched in polar residues. The interval 1–114 (MSTENGTTDT…FVPEDEEMEE (114 aa)) is disordered. Basic and acidic residues predominate over residues 24 to 40 (SKGKGKAAAESEDHPMG). Acidic residues-rich tracts occupy residues 41–68 (EAED…EEID) and 93–114 (PAEE…EMEE).

Belongs to the CHZ1 family. As to quaternary structure, forms a heterotrimer with H2A.Z-H2B, stabilizing the association of the histone dimer. Also, with a lower affinity, forms a heterotrimer with H2A-H2B.

It localises to the nucleus. Functionally, forms a chaperone-bound H2A.Z-H2B complex that acts as a source for SWR1 complex-dependent H2A to H2A.Z histone replacement in chromatin. The chain is Histone H2A.Z-specific chaperone chz-1 (chz-1) from Neurospora crassa (strain ATCC 24698 / 74-OR23-1A / CBS 708.71 / DSM 1257 / FGSC 987).